Consider the following 258-residue polypeptide: Gamma carbonic anhydrase 3, mitochondrial (258 aa).

The N-terminal 43 residues, Met-1 to Arg-43, are a transit peptide targeting the mitochondrion. Substrate-binding positions include Arg-86–Asp-88 and Gln-101–Asp-102. The Zn(2+) site is built by His-107, His-130, and His-135. A substrate-binding site is contributed by Asn-209.

Belongs to the gamma-class carbonic anhydrase family. Homotrimer. Component of the oxidoreductase respiratory chain complex I; element of the extra matrix-exposed domain, which is attached to the membrane arm of this complex. The cofactor is Zn(2+).

The protein resides in the mitochondrion membrane. In terms of biological role, enzyme involved in the catabolism of H(2)CO(3) but that does not mediates the reversible hydration of carbon dioxide. Mediates complex I assembly in mitochondria and respiration. In Arabidopsis thaliana (Mouse-ear cress), this protein is Gamma carbonic anhydrase 3, mitochondrial (GAMMACA3).